A 208-amino-acid chain; its full sequence is Transmembrane emp24 domain-containing protein p24beta2 (208 aa).

A signal peptide spans 1–21 (MSLKGTIVLLGLLWSFQATLG). Residues 22–176 (IRFVIDREEC…ENMSKRAVHK (155 aa)) are Lumenal-facing. Residues 29–116 (EECFSHKAEY…HETIDFDVQL (88 aa)) enclose the GOLD domain. Positions 134–149 (LMEQISKLEEALYNIQ) form a coiled coil. Asparagine 168 is a glycosylation site (N-linked (GlcNAc...) asparagine). A helical transmembrane segment spans residues 177 to 195 (ALFESFALIGASFLQVYLL). The Cytoplasmic segment spans residues 196-208 (RRLFERKLGMSRV). The COPII vesicle coat-binding signature appears at 198–199 (LF). Positions 198-208 (LFERKLGMSRV) match the COPI vesicle coat-binding motif. Positions 207–208 (RV) match the Required for the export from the endoplasmic reticulum to the Golgi motif.

Belongs to the EMP24/GP25L family. In terms of assembly, probably oligomerizes with other members of the EMP24/GP25L family. Associates with the COPI vesicle coat (coatomer). Associates with the COPII vesicle coat (coatomer). Interacts with p24delta5.

It localises to the golgi apparatus. Its subcellular location is the cis-Golgi network membrane. The protein resides in the golgi stack membrane. Functionally, involved in vesicular protein trafficking. Mainly functions in the early secretory pathway but also in post-Golgi membranes. Thought to act as cargo receptor at the lumenal side for incorporation of secretory cargo molecules into transport vesicles and to be involved in vesicle coat formation at the cytoplasmic side. Interacts with p24delta5 at endoplasmic reticulum export sites for endoplasmic reticulum exit and coupled transport to the Golgi apparatus. This is Transmembrane emp24 domain-containing protein p24beta2 from Arabidopsis thaliana (Mouse-ear cress).